The primary structure comprises 379 residues: Methionine aminopeptidase 1 (379 aa).

The C6H2-type zinc-finger motif lies at 7–60 (KHICCGIDCNNEADRLQCPKCLNDGVKSYFCGQECFRNSWNIHKHLHRPPNVEK). Positions 10, 15, 24, 27, 37, 41, 49, and 53 each coordinate Zn(2+). H192 lines the a protein pocket. Zn(2+) is bound by residues D209, D220, and H289. A protein is bound at residue H296. Residues E322 and E353 each coordinate Zn(2+). S373 carries the phosphoserine modification.

It belongs to the peptidase M24A family. Methionine aminopeptidase type 1 subfamily. As to quaternary structure, associates with the 60S ribosomal subunit of the 80S translational complex. The cofactor is Zn(2+). It depends on Co(2+) as a cofactor. Requires Mn(2+) as cofactor. Fe(2+) is required as a cofactor.

The protein resides in the cytoplasm. It is found in the nucleus. The protein localises to the nucleolus. The enzyme catalyses Release of N-terminal amino acids, preferentially methionine, from peptides and arylamides.. Functionally, cotranslationally removes the N-terminal methionine from nascent proteins. The N-terminal methionine is often cleaved when the second residue in the primary sequence is small and uncharged (Met-Ala-, Cys, Gly, Pro, Ser, Thr, or Val). The protein is Methionine aminopeptidase 1 (fma1) of Schizosaccharomyces pombe (strain 972 / ATCC 24843) (Fission yeast).